Here is a 450-residue protein sequence, read N- to C-terminus: Tubulin alpha chain (450 aa).

Residue Gln-11 coordinates GTP. An N6-acetyllysine modification is found at Lys-40. GTP is bound by residues Glu-71, Ser-140, Gly-144, Thr-145, Thr-179, Asn-206, and Asn-228. Position 71 (Glu-71) interacts with Mg(2+). The active site involves Glu-254.

It belongs to the tubulin family. Dimer of alpha and beta chains. A typical microtubule is a hollow water-filled tube with an outer diameter of 25 nm and an inner diameter of 15 nM. Alpha-beta heterodimers associate head-to-tail to form protofilaments running lengthwise along the microtubule wall with the beta-tubulin subunit facing the microtubule plus end conferring a structural polarity. Microtubules usually have 13 protofilaments but different protofilament numbers can be found in some organisms and specialized cells. It depends on Mg(2+) as a cofactor. Undergoes a tyrosination/detyrosination cycle, the cyclic removal and re-addition of a C-terminal tyrosine residue by the enzymes tubulin tyrosine carboxypeptidase (TTCP) and tubulin tyrosine ligase (TTL), respectively. In terms of processing, acetylation of alpha chains at Lys-40 stabilizes microtubules and affects affinity and processivity of microtubule motors. This modification has a role in multiple cellular functions, ranging from cell motility, cell cycle progression or cell differentiation to intracellular trafficking and signaling.

The protein localises to the cytoplasm. Its subcellular location is the cytoskeleton. It catalyses the reaction GTP + H2O = GDP + phosphate + H(+). Functionally, tubulin is the major constituent of microtubules, a cylinder consisting of laterally associated linear protofilaments composed of alpha- and beta-tubulin heterodimers. Microtubules grow by the addition of GTP-tubulin dimers to the microtubule end, where a stabilizing cap forms. Below the cap, tubulin dimers are in GDP-bound state, owing to GTPase activity of alpha-tubulin. This is Tubulin alpha chain from Lepidoglyphus destructor (Storage mite).